A 449-amino-acid polypeptide reads, in one-letter code: C4-dicarboxylate transport protein 1 (449 aa).

A run of 8 helical transmembrane segments spans residues 16-38 (FLQVVIGLVIGVICGVGIPDLAV), 53-71 (MLIALIVFCVVVNGISGAG), 84-106 (VIYFEILTTIALVLGLVVAYSLG), 157-176 (ILQVLLFSVLFGSALNLVGE), 197-219 (GMIVRLAPLGVFGAVAFTTARYG), 229-251 (LVLVFYATCLVFVMAVLGSVLRL), 311-333 (GFSIYLTLAVVFIAHVTGTPLAM), and 358-380 (LVILAATLTAVPAIPVAGLVLVL).

The protein belongs to the dicarboxylate/amino acid:cation symporter (DAACS) (TC 2.A.23) family.

The protein resides in the cell inner membrane. Functionally, responsible for the transport of dicarboxylates such as succinate, fumarate, and malate from the periplasm across the membrane. This chain is C4-dicarboxylate transport protein 1 (dctA1), found in Pseudomonas aeruginosa (strain ATCC 15692 / DSM 22644 / CIP 104116 / JCM 14847 / LMG 12228 / 1C / PRS 101 / PAO1).